Here is a 65-residue protein sequence, read N- to C-terminus: Large ribosomal subunit protein bL35 (65 aa).

The protein belongs to the bacterial ribosomal protein bL35 family.

The protein is Large ribosomal subunit protein bL35 of Prochlorococcus marinus (strain MIT 9215).